Reading from the N-terminus, the 191-residue chain is MCGEKSLLQEIDEVNIAMGLISLGARMQVLESETSLSRRRLLRLYKELRGCPPPKGMLPFSEDWFMSWEQNIHSSMFYNIYLYLKKTEQGRSIEMLMKTYRLYLEQCSTCSDEKPVLGLTRAWTLLRFIDCGIISRKACSVCGGGFIVTTEFIKNPFTCSLCSPPSRALKKSQVSNTGLLGTFAAPEIMTA.

The Zn(2+) site is built by Cys-139, Cys-142, Cys-159, and Cys-162.

This sequence belongs to the FlhC family. In terms of assembly, heterohexamer composed of two FlhC and four FlhD subunits. Each FlhC binds a FlhD dimer, forming a heterotrimer, and a hexamer assembles by dimerization of two heterotrimers. Zn(2+) is required as a cofactor.

It localises to the cytoplasm. Its function is as follows. Functions in complex with FlhD as a master transcriptional regulator that regulates transcription of several flagellar and non-flagellar operons by binding to their promoter region. Activates expression of class 2 flagellar genes, including fliA, which is a flagellum-specific sigma factor that turns on the class 3 genes. Also regulates genes whose products function in a variety of physiological pathways. The polypeptide is Flagellar transcriptional regulator FlhC (Enterobacter cloacae subsp. cloacae (strain ATCC 13047 / DSM 30054 / NBRC 13535 / NCTC 10005 / WDCM 00083 / NCDC 279-56)).